A 181-amino-acid polypeptide reads, in one-letter code: ADP-ribosylation factor 1 (181 aa).

Gly2 is lipidated: N-myristoyl glycine. GTP-binding positions include 24–31, 67–71, and 126–129; these read GLDAAGKT, DVGGQ, and NKQD.

Belongs to the small GTPase superfamily. Arf family.

It is found in the golgi apparatus. The enzyme catalyses GTP + H2O = GDP + phosphate + H(+). Its function is as follows. GTP-binding protein involved in protein trafficking; may modulate vesicle budding and uncoating within the Golgi apparatus. This is ADP-ribosylation factor 1 (ARF1) from Daucus carota (Wild carrot).